The sequence spans 254 residues: 5-oxoprolinase subunit A (254 aa).

Belongs to the LamB/PxpA family. As to quaternary structure, forms a complex composed of PxpA, PxpB and PxpC.

It carries out the reaction 5-oxo-L-proline + ATP + 2 H2O = L-glutamate + ADP + phosphate + H(+). Its function is as follows. Catalyzes the cleavage of 5-oxoproline to form L-glutamate coupled to the hydrolysis of ATP to ADP and inorganic phosphate. In Acinetobacter baumannii (strain ATCC 17978 / DSM 105126 / CIP 53.77 / LMG 1025 / NCDC KC755 / 5377), this protein is 5-oxoprolinase subunit A.